Consider the following 614-residue polypeptide: Bifunctional 3'-phosphoadenosine 5'-phosphosulfate synthase 2 (614 aa).

The tract at residues Met-1 to Ile-215 is adenylyl-sulfate kinase. Residue Gly-52 to Thr-57 coordinates ATP. Adenosine 5'-phosphosulfate contacts are provided by residues Asp-79 to Arg-82, Phe-91, Arg-96 to Asn-99, Ile-122 to Ser-123, Lys-161, and Gly-174 to Phe-175. ATP contacts are provided by residues Ser-197, Gln-409 to Asn-412, Gly-511 to Ala-515, and Ala-553. The sulfate adenylyltransferase stretch occupies residues Ile-224–Asn-614.

It in the N-terminal section; belongs to the APS kinase family. In the C-terminal section; belongs to the sulfate adenylyltransferase family. As to expression, expressed in cartilage and adrenal gland.

The enzyme catalyses sulfate + ATP + H(+) = adenosine 5'-phosphosulfate + diphosphate. The catalysed reaction is adenosine 5'-phosphosulfate + ATP = 3'-phosphoadenylyl sulfate + ADP + H(+). The protein operates within sulfur metabolism; sulfate assimilation. Its function is as follows. Bifunctional enzyme with both ATP sulfurylase and APS kinase activity, which mediates two steps in the sulfate activation pathway. The first step is the transfer of a sulfate group to ATP to yield adenosine 5'-phosphosulfate (APS), and the second step is the transfer of a phosphate group from ATP to APS yielding 3'-phosphoadenylylsulfate/PAPS, the activated sulfate donor used by sulfotransferases. In mammals, PAPS is the sole source of sulfate while APS appears to only be an intermediate in the sulfate-activation pathway. Plays indirectly an important role in skeletogenesis during postnatal growth. The polypeptide is Bifunctional 3'-phosphoadenosine 5'-phosphosulfate synthase 2 (PAPSS2) (Homo sapiens (Human)).